A 335-amino-acid chain; its full sequence is MSLPFLGPMSLSGFEHSWFFLFLLVVAGLAALYILMQLARHGRMLRFANMELLESVAPKRPSTWRHLPAILLVASLVLFTIAMAGPTNDVRIPRNRAVVMLVIDVSQSMRATDVAPNRMAAAQEAAKQFADELTPGINLGLIAYAGTATVLVSPTTNREATKNALDKLQFADRTATGEGIFTALQVQAIATVGAVIAGDKPPPARIVLFSDGKETMPTNPDNPKGAFTAARTAKDQGVPISTISFGTPYGFVEINDQRQPVPVDDETLKKVAQLSGGNAYNARSLQELKSVYATLQQQIGYETIKGDASVGWVRLGALVLRLAADALLINRRLPT.

A run of 2 helical transmembrane segments spans residues 18–38 and 67–87; these read WFFL…LMQL and LPAI…AGPT. The 198-residue stretch at 98-295 folds into the VWFA domain; sequence VVMLVIDVSQ…QELKSVYATL (198 aa). Residues 309-329 form a helical membrane-spanning segment; sequence SVGWVRLGALVLRLAADALLI.

The protein belongs to the UPF0353 family.

Its subcellular location is the cell membrane. The chain is UPF0353 protein MAV335 from Mycobacterium avium.